The chain runs to 252 residues: tRNA (guanine-N(1)-)-methyltransferase (252 aa).

S-adenosyl-L-methionine contacts are provided by residues glycine 113 and leucine 133–leucine 138.

The protein belongs to the RNA methyltransferase TrmD family. Homodimer.

It localises to the cytoplasm. It carries out the reaction guanosine(37) in tRNA + S-adenosyl-L-methionine = N(1)-methylguanosine(37) in tRNA + S-adenosyl-L-homocysteine + H(+). Specifically methylates guanosine-37 in various tRNAs. This is tRNA (guanine-N(1)-)-methyltransferase from Stenotrophomonas maltophilia (strain R551-3).